The primary structure comprises 121 residues: Ribosome-binding factor A (121 aa).

Belongs to the RbfA family. As to quaternary structure, monomer. Binds 30S ribosomal subunits, but not 50S ribosomal subunits or 70S ribosomes.

The protein localises to the cytoplasm. One of several proteins that assist in the late maturation steps of the functional core of the 30S ribosomal subunit. Associates with free 30S ribosomal subunits (but not with 30S subunits that are part of 70S ribosomes or polysomes). Required for efficient processing of 16S rRNA. May interact with the 5'-terminal helix region of 16S rRNA. This chain is Ribosome-binding factor A, found in Heliobacterium modesticaldum (strain ATCC 51547 / Ice1).